Reading from the N-terminus, the 342-residue chain is Probable tyrosine--tRNA ligase, cytoplasmic (342 aa).

Tyrosine 48 contacts L-tyrosine. The 'HIGH' region motif lies at isoleucine 53 to tyrosine 61. Positions 175, 179, 182, and 197 each coordinate L-tyrosine. Residues lysine 231–serine 235 carry the 'KMSKS' region motif.

It belongs to the class-I aminoacyl-tRNA synthetase family. Homodimer.

Its subcellular location is the cytoplasm. It carries out the reaction tRNA(Tyr) + L-tyrosine + ATP = L-tyrosyl-tRNA(Tyr) + AMP + diphosphate + H(+). The sequence is that of Probable tyrosine--tRNA ligase, cytoplasmic from Enterocytozoon bieneusi (strain H348) (Microsporidian parasite).